The primary structure comprises 599 residues: Sulfite reductase [NADPH] flavoprotein alpha-component (599 aa).

The Flavodoxin-like domain maps to 64 to 202; it reads ITIISASQTG…AASEWRARVV (139 aa). Residues 70-75, 117-120, and 153-162 each bind FMN; these read SQTGNA, STQG, and LGDSSYEFFC. The FAD-binding FR-type domain occupies 234–448; it reads DAPLVASLSV…IEHNDNFRLP (215 aa). FAD-binding positions include Thr322, Ala356, 386 to 389, 404 to 406, Tyr410, and 419 to 422; these read RLYS, TVG, and GGAS. NADP(+) contacts are provided by residues 519–520, 525–529, and Asp561; these read SR and KVYVQ. Residue Tyr599 coordinates FAD.

This sequence belongs to the NADPH-dependent sulphite reductase flavoprotein subunit CysJ family. The protein in the N-terminal section; belongs to the flavodoxin family. In the C-terminal section; belongs to the flavoprotein pyridine nucleotide cytochrome reductase family. In terms of assembly, alpha(8)-beta(8). The alpha component is a flavoprotein, the beta component is a hemoprotein. FAD serves as cofactor. FMN is required as a cofactor.

It catalyses the reaction hydrogen sulfide + 3 NADP(+) + 3 H2O = sulfite + 3 NADPH + 4 H(+). The protein operates within sulfur metabolism; hydrogen sulfide biosynthesis; hydrogen sulfide from sulfite (NADPH route): step 1/1. In terms of biological role, component of the sulfite reductase complex that catalyzes the 6-electron reduction of sulfite to sulfide. This is one of several activities required for the biosynthesis of L-cysteine from sulfate. The flavoprotein component catalyzes the electron flow from NADPH -&gt; FAD -&gt; FMN to the hemoprotein component. The protein is Sulfite reductase [NADPH] flavoprotein alpha-component of Escherichia coli (strain K12).